We begin with the raw amino-acid sequence, 148 residues long: Large-conductance mechanosensitive channel (148 aa).

2 consecutive transmembrane segments (helical) span residues 9–29 and 79–99; these read AFAV…GAAF and IQTV…VKAI.

Belongs to the MscL family. Homopentamer.

The protein localises to the cell inner membrane. Channel that opens in response to stretch forces in the membrane lipid bilayer. May participate in the regulation of osmotic pressure changes within the cell. This chain is Large-conductance mechanosensitive channel, found in Pseudomonas syringae pv. syringae (strain B728a).